The primary structure comprises 156 residues: Small ribosomal subunit protein uS7 (156 aa).

Belongs to the universal ribosomal protein uS7 family. As to quaternary structure, part of the 30S ribosomal subunit. Contacts proteins S9 and S11.

In terms of biological role, one of the primary rRNA binding proteins, it binds directly to 16S rRNA where it nucleates assembly of the head domain of the 30S subunit. Is located at the subunit interface close to the decoding center, probably blocks exit of the E-site tRNA. The polypeptide is Small ribosomal subunit protein uS7 (Geobacillus sp. (strain WCH70)).